A 360-amino-acid chain; its full sequence is MKASIISKLESLKERHEELEALLGEPSVINDQDKFRAYSKEYAQLEDVVKCFARWNWLNNNIEETQLLLDDPDMKEMAELEIEESKAEIENAEQQLQILLLPKDPNDEYNAYLEIRAGTGGDEAGIFAGDLFRMYSRYAESKRWRVEVLNANESEQGGYKEIIVKVNGEGVYGQLKFESGGHRVQRVPKTESQGRIHTSACTVAVMPELPENEMPEINPSDLRIDTYRSSGAGGQHVNTTDSAVRITHIPTGIVVECQDERSQHKNKAKALSVLASRIAQAEQERQAQAQADTRRNLLGSGDRSDKIRTYNYPQGRVTDHRINLTVYRLDEVMNGKIDELIQPIITEYQADQLAMLSEQN.

N5-methylglutamine is present on glutamine 235. The tract at residues 284-312 (ERQAQAQADTRRNLLGSGDRSDKIRTYNY) is disordered.

Belongs to the prokaryotic/mitochondrial release factor family. Post-translationally, methylated by PrmC. Methylation increases the termination efficiency of RF1.

It is found in the cytoplasm. Its function is as follows. Peptide chain release factor 1 directs the termination of translation in response to the peptide chain termination codons UAG and UAA. This is Peptide chain release factor 1 from Histophilus somni (strain 129Pt) (Haemophilus somnus).